The primary structure comprises 345 residues: NADH-quinone oxidoreductase subunit H (345 aa).

Transmembrane regions (helical) follow at residues 13-33 (VLILAQVLAVIGFVMVSLLFL), 84-104 (FMLAPMTSFVLALLAWAVIPF), 115-135 (VAILFVFAISSLEVYGVIMGG), 161-181 (LGLIIIGVIISTGSMNFGGIV), 190-210 (FFSWYWLPHFPMVFLFFISCL), 248-268 (YIAIFLMCALTSLLFFGGWLS), 277-297 (VFWMIAKMAFFFFLFAMVKAI), and 309-329 (LGWKVFLPFSLVWVVFVAFAA).

It belongs to the complex I subunit 1 family. As to quaternary structure, NDH-1 is composed of 14 different subunits. Subunits NuoA, H, J, K, L, M, N constitute the membrane sector of the complex.

It localises to the cell inner membrane. The enzyme catalyses a quinone + NADH + 5 H(+)(in) = a quinol + NAD(+) + 4 H(+)(out). NDH-1 shuttles electrons from NADH, via FMN and iron-sulfur (Fe-S) centers, to quinones in the respiratory chain. The immediate electron acceptor for the enzyme in this species is believed to be ubiquinone. Couples the redox reaction to proton translocation (for every two electrons transferred, four hydrogen ions are translocated across the cytoplasmic membrane), and thus conserves the redox energy in a proton gradient. This subunit may bind ubiquinone. This chain is NADH-quinone oxidoreductase subunit H, found in Roseobacter denitrificans (strain ATCC 33942 / OCh 114) (Erythrobacter sp. (strain OCh 114)).